The following is a 440-amino-acid chain: Gamma-aminobutyric acid receptor subunit pi (440 aa).

The signal sequence occupies residues 1–23 (MKRSLHLTFVCLSLFSARMCVQG). Residues 24-241 (NQFNIEVSRS…LVLQFELQRN (218 aa)) lie on the Extracellular side of the membrane. 3 N-linked (GlcNAc...) asparagine glycosylation sites follow: N43, N102, and N145. C160 and C174 are disulfide-bonded. Residues N196 and N228 are each glycosylated (N-linked (GlcNAc...) asparagine). A helical transmembrane segment spans residues 242–262 (VLYFILETYVPSTFLVVLSWV). At 263–270 (SFWISLDS) the chain is on the cytoplasmic side. Residues 271 to 290 (VPARTCIGVTTVLSMTTLMI) traverse the membrane as a helical segment. Residues 291–301 (GSRTSLPNTNC) lie on the Extracellular side of the membrane. Residues 302-322 (FIKAIDVYLGICFSFVFGALL) traverse the membrane as a helical segment. At 323-419 (EYAVAHYSSL…NPSNVDRYSK (97 aa)) the chain is on the cytoplasmic side. The chain crosses the membrane as a helical span at residues 420 to 440 (LLFPLIFMLANVFYWAYYMYF).

It belongs to the ligand-gated ion channel (TC 1.A.9) family. Gamma-aminobutyric acid receptor (TC 1.A.9.5) subfamily. GABRP sub-subfamily. As to quaternary structure, heteropentamer, formed by a combination of alpha (GABRA1-6), beta (GABRB1-3), gamma (GABRG1-3), delta (GABRD), epsilon (GABRE), rho (GABRR1-3), pi (GABRP) and theta (GABRQ) chains, each subunit exhibiting distinct physiological and pharmacological properties.

The protein resides in the cell membrane. It is found in the apical cell membrane. The catalysed reaction is chloride(in) = chloride(out). Its function is as follows. Pi subunit of the heteropentameric ligand-gated chloride channel gated by gamma-aminobutyric acid (GABA). GABA-gated chloride channels, also named GABA(A) receptors (GABAAR), consist of five subunits arranged around a central pore and contain GABA active binding site(s) located at the alpha and beta subunit interfaces. When activated by GABA, GABAARs selectively allow the flow of chloride anions across the cell membrane down their electrochemical gradient. Pi-containing GABAARs are mostly located in peripheral tissues. In the uterus, pi subunits modulate uterus contraction by altering the sensitivity of GABAARs to pregnanolone. In the lungs, pi-containing GABAARs contribute to pulmonary fluid transport via luminal secretion of chloride. The sequence is that of Gamma-aminobutyric acid receptor subunit pi (GABRP) from Bos taurus (Bovine).